A 260-amino-acid polypeptide reads, in one-letter code: 3'-5' ssDNA/RNA exonuclease TatD (260 aa).

A divalent metal cation contacts are provided by Glu-92, His-128, and His-153.

The protein belongs to the metallo-dependent hydrolases superfamily. TatD-type hydrolase family. TatD subfamily. As to quaternary structure, monomer. Mg(2+) serves as cofactor.

The protein resides in the cytoplasm. In terms of biological role, 3'-5' exonuclease that prefers single-stranded DNA and RNA. May play a role in the H(2)O(2)-induced DNA damage repair. In Pectobacterium carotovorum subsp. carotovorum (strain PC1), this protein is 3'-5' ssDNA/RNA exonuclease TatD.